Consider the following 431-residue polypeptide: Protein translocase subunit SecY (431 aa).

Over 1–17 (MFKTISNFMRVSDIRNK) the chain is Cytoplasmic. The helical transmembrane segment at 18 to 38 (IIFTLLMLIVFRIGAFIPVPY) threads the bilayer. Topologically, residues 39 to 66 (VNAEALQAQSQMGVFDLLNTFGGGALYQ) are extracellular. The chain crosses the membrane as a helical span at residues 67–87 (FSIFAMGITPYITASIIIQLL). Over 88–115 (QMDVVPKFTEWSKQGEVGRRKLAQFTRY) the chain is Cytoplasmic. A helical transmembrane segment spans residues 116 to 136 (FTIVLGFIQALGMSYGFNNLA). The Extracellular segment spans residues 137–145 (NGMLIEKSG). A helical membrane pass occupies residues 146–166 (VSTYLIIALVLTGGTAFLMWL). At 167-177 (GEQITSHGVGN) the chain is on the cytoplasmic side. Residues 178–198 (GISIIIFAGIVSSIPKTIGQI) form a helical membrane-spanning segment. The Extracellular portion of the chain corresponds to 199–213 (YETQFVGSNDQLFIH). The helical transmembrane segment at 214 to 234 (IVKVALLVIAILAVIVGVIFI) threads the bilayer. Over 235 to 261 (QQAVRKIAIQYAKGTGRSPAGGGQSTH) the chain is Cytoplasmic. The helical transmembrane segment at 262–282 (LPLKVNPAGVIPVIFAVAFLI) threads the bilayer. The Extracellular segment spans residues 283–308 (TPRTIASFFGTNDVTKWIQNNFDNTH). The chain crosses the membrane as a helical span at residues 309–329 (PVGMAIYVALIIAFTYFYAFV). Topologically, residues 330-368 (QVNPEQMADNLKKQGGYIPGVRPGKMTQDRITSILYRLT) are cytoplasmic. 2 consecutive transmembrane segments (helical) span residues 369–389 (FVGSIFLAVISILPIFFIQFA) and 390–410 (GLPQSAQIGGTSLLIVVGVAL). The Cytoplasmic segment spans residues 411–431 (ETMKQLESQLVKRNYRGFMKN).

Belongs to the SecY/SEC61-alpha family. Component of the Sec protein translocase complex. Heterotrimer consisting of SecY, SecE and SecG subunits. The heterotrimers can form oligomers, although 1 heterotrimer is thought to be able to translocate proteins. Interacts with the ribosome. Interacts with SecDF, and other proteins may be involved. Interacts with SecA. Interacts with FloT.

It is found in the cell membrane. Its subcellular location is the membrane raft. Functionally, the central subunit of the protein translocation channel SecYEG. Consists of two halves formed by TMs 1-5 and 6-10. These two domains form a lateral gate at the front which open onto the bilayer between TMs 2 and 7, and are clamped together by SecE at the back. The channel is closed by both a pore ring composed of hydrophobic SecY resides and a short helix (helix 2A) on the extracellular side of the membrane which forms a plug. The plug probably moves laterally to allow the channel to open. The ring and the pore may move independently. The sequence is that of Protein translocase subunit SecY from Bacillus subtilis (strain 168).